A 144-amino-acid polypeptide reads, in one-letter code: Large ribosomal subunit protein uL15 (144 aa).

The segment at 1-58 (MRLNTLAPAAGSKHAPKRVGRGIGSGLGKTGGRGHKGQKSRSGGKVRPGFEGGQMPLK) is disordered. Residues 21-31 (RGIGSGLGKTG) are compositionally biased toward gly residues. The span at 32-44 (GRGHKGQKSRSGG) shows a compositional bias: basic residues.

This sequence belongs to the universal ribosomal protein uL15 family. In terms of assembly, part of the 50S ribosomal subunit.

Binds to the 23S rRNA. In Vibrio parahaemolyticus serotype O3:K6 (strain RIMD 2210633), this protein is Large ribosomal subunit protein uL15.